Reading from the N-terminus, the 201-residue chain is Small ribosomal subunit protein uS4c (201 aa).

The region spanning 89 to 152 (MRLDNILFRL…NSRTLVQNLL (64 aa)) is the S4 RNA-binding domain.

This sequence belongs to the universal ribosomal protein uS4 family. In terms of assembly, part of the 30S ribosomal subunit. Contacts protein S5. The interaction surface between S4 and S5 is involved in control of translational fidelity.

It is found in the plastid. The protein localises to the chloroplast. Its function is as follows. One of the primary rRNA binding proteins, it binds directly to 16S rRNA where it nucleates assembly of the body of the 30S subunit. With S5 and S12 plays an important role in translational accuracy. This Olimarabidopsis pumila (Dwarf rocket) protein is Small ribosomal subunit protein uS4c (rps4).